The primary structure comprises 146 residues: Large ribosomal subunit protein uL15 (146 aa).

Positions 1 to 59 are disordered; that stretch reads MRLEELKAPAGANKRTKRVGRGTGSGHGKTSTRGHKGQKSRSGGGVRPGFEGGQMPLQR. Residues 30–39 show a composition bias toward basic residues; that stretch reads TSTRGHKGQK. The span at 42-52 shows a compositional bias: gly residues; that stretch reads SGGGVRPGFEG.

The protein belongs to the universal ribosomal protein uL15 family. Part of the 50S ribosomal subunit.

In terms of biological role, binds to the 23S rRNA. This Syntrophomonas wolfei subsp. wolfei (strain DSM 2245B / Goettingen) protein is Large ribosomal subunit protein uL15.